The following is a 110-amino-acid chain: UPF0145 protein Blon_0093/BLIJ_0092 (110 aa).

This sequence belongs to the UPF0145 family.

The protein is UPF0145 protein Blon_0093/BLIJ_0092 of Bifidobacterium longum subsp. infantis (strain ATCC 15697 / DSM 20088 / JCM 1222 / NCTC 11817 / S12).